We begin with the raw amino-acid sequence, 430 residues long: MRLISISTTIAFGFAFQAQAATELQWWHAMTGANNEMIEELTKEFNESQSTYKVVPVFKGTYPETLNAGIAAFRSKQPPAIIQVFDAGSGTMMAAEGAIVPAAEILQKGGFTFDKSQYLPGIVAYYSKPDGTMLSFPYNSSSPILYYNKDAFQKAGLNVDNPPKTWPEVFEAAKKIKTSGAAPCGMTSTWLTWIQTENFAAWNNVPYGTNENGLGGTDVKLQINAPLYVEHFQAIADLAKDGAFRYGGRTSEAKQLFTSGECAILTESSGGLGDIAKSGVNYGIGQLPYYEGHGPQNTIPGGASLWVFAGKSDEEYKGVAEFFNFLSQTEIQAKLHQVSGYMPVTMAAYEETKKSGFYEKNPGRETPLLQMMGKAPTENSKGVRLVNLPQVRDILNEEFEAMLSGQQDAKTALDKAVERGNAAIAAAISN.

A signal peptide spans 1 to 20; it reads MRLISISTTIAFGFAFQAQA. Sn-glycerol 3-phosphate contacts are provided by tyrosine 62, aspartate 86, serine 141, serine 268, glycine 302, tyrosine 341, and arginine 392.

Belongs to the bacterial solute-binding protein 1 family. The complex is composed of two ATP-binding proteins (UgpC), two transmembrane proteins (UgpA and UgpE) and a solute-binding protein (UgpB).

It localises to the periplasm. Functionally, part of the ABC transporter complex UgpBAEC involved in sn-glycerol-3-phosphate (G3P) import. Binds G3P. The protein is sn-glycerol-3-phosphate-binding periplasmic protein UgpB (ugpB) of Rhizobium meliloti (strain 1021) (Ensifer meliloti).